A 93-amino-acid polypeptide reads, in one-letter code: Small ribosomal subunit protein uS19 (93 aa).

Belongs to the universal ribosomal protein uS19 family.

Protein S19 forms a complex with S13 that binds strongly to the 16S ribosomal RNA. The chain is Small ribosomal subunit protein uS19 from Lactobacillus helveticus (strain DPC 4571).